The primary structure comprises 361 residues: Phosphoserine aminotransferase (361 aa).

Arginine 43 is an L-glutamate binding site. Residues 77-78 (AS), tryptophan 103, threonine 153, aspartate 173, and glutamine 196 contribute to the pyridoxal 5'-phosphate site. Position 197 is an N6-(pyridoxal phosphate)lysine (lysine 197). A pyridoxal 5'-phosphate-binding site is contributed by 238–239 (NT).

The protein belongs to the class-V pyridoxal-phosphate-dependent aminotransferase family. SerC subfamily. As to quaternary structure, homodimer. Pyridoxal 5'-phosphate is required as a cofactor.

Its subcellular location is the cytoplasm. It carries out the reaction O-phospho-L-serine + 2-oxoglutarate = 3-phosphooxypyruvate + L-glutamate. The catalysed reaction is 4-(phosphooxy)-L-threonine + 2-oxoglutarate = (R)-3-hydroxy-2-oxo-4-phosphooxybutanoate + L-glutamate. It participates in amino-acid biosynthesis; L-serine biosynthesis; L-serine from 3-phospho-D-glycerate: step 2/3. Catalyzes the reversible conversion of 3-phosphohydroxypyruvate to phosphoserine and of 3-hydroxy-2-oxo-4-phosphonooxybutanoate to phosphohydroxythreonine. This chain is Phosphoserine aminotransferase (serC), found in Alkalihalobacillus alcalophilus (Bacillus alcalophilus).